We begin with the raw amino-acid sequence, 319 residues long: Ankyrin repeat domain-containing protein 1 (319 aa).

Residues 55–89 (LGEEQRKSEKVREAELKKKKLEQRSKLENLEDLEI) adopt a coiled-coil conformation. ANK repeat units follow at residues 152-181 (YKRTALHRACLEGHLAIVEKLMEAGAQIEF), 185-214 (LESTAIHWACRGGNLDVLKLLLNKGAKISA), 218-247 (LLSTALHVAVRTGHYECAEHLIACEADLNA), 251-280 (EGDTPLHDAVRLNRYKMIRLLMTFGADLNV), and 284-315 (AGKTPMDLVLHWQNGTKAIFDSLKENAYKNSR).

As to quaternary structure, interacts with TTN/titin. Interacts with YBX1. In terms of tissue distribution, expressed in heart, cardiac muscle.

The protein resides in the nucleus. In terms of biological role, may play an important role in endothelial cell activation. May act as a nuclear transcription factor that negatively regulates the expression of cardiac genes. In Rattus norvegicus (Rat), this protein is Ankyrin repeat domain-containing protein 1 (Ankrd1).